A 421-amino-acid polypeptide reads, in one-letter code: Subtilisin-like protease 2 (421 aa).

Residues 1-16 form the signal peptide; the sequence is MQLLNFGLLLLPFVAG. Positions 17–122 are excised as a propeptide; it reads DLAPQPEPLL…VHPDQHFYLA (106 aa). Positions 36–121 constitute an Inhibitor I9 domain; sequence QYLVTLKEGL…SVHPDQHFYL (86 aa). Positions 131–421 constitute a Peptidase S8 domain; that stretch reads RWGLGYMSSK…ERKCKLPKYY (291 aa). The active-site Charge relay system is the aspartate 169. A glycan (N-linked (GlcNAc...) asparagine) is linked at asparagine 192. The Charge relay system role is filled by histidine 201. Residues asparagine 248, asparagine 261, and asparagine 348 are each glycosylated (N-linked (GlcNAc...) asparagine). Residue serine 357 is the Charge relay system of the active site. Residue asparagine 388 is glycosylated (N-linked (GlcNAc...) asparagine).

The protein belongs to the peptidase S8 family.

The protein resides in the secreted. Secreted subtilisin-like serine protease with keratinolytic activity that contributes to pathogenicity. The polypeptide is Subtilisin-like protease 2 (SUB2) (Trichophyton rubrum (Athlete's foot fungus)).